Consider the following 138-residue polypeptide: Protein FAM136A (138 aa).

Belongs to the FAM136 family.

This is Protein FAM136A (fam136a) from Xenopus laevis (African clawed frog).